A 261-amino-acid polypeptide reads, in one-letter code: Pantothenate synthetase (261 aa).

Position 29–36 (Met29–His36) interacts with ATP. Catalysis depends on His36, which acts as the Proton donor. Residue Gln60 coordinates (R)-pantoate. Gln60 contacts beta-alanine. Gly147–Asp150 contacts ATP. (R)-pantoate is bound at residue Gln153. An ATP-binding site is contributed by Leu184–Arg187.

Belongs to the pantothenate synthetase family. Homodimer.

Its subcellular location is the cytoplasm. It catalyses the reaction (R)-pantoate + beta-alanine + ATP = (R)-pantothenate + AMP + diphosphate + H(+). Its pathway is cofactor biosynthesis; (R)-pantothenate biosynthesis; (R)-pantothenate from (R)-pantoate and beta-alanine: step 1/1. Catalyzes the condensation of pantoate with beta-alanine in an ATP-dependent reaction via a pantoyl-adenylate intermediate. This chain is Pantothenate synthetase, found in Francisella tularensis subsp. holarctica (strain FTNF002-00 / FTA).